A 1402-amino-acid polypeptide reads, in one-letter code: MSGARTVSTPTPPQTGGGVEPQANGETPQVAVIVRSDDRSQGAIIGGRPGLPGPEHSPSESQPSSPSPTPSPPPILEPGSEPNLAVLSLPGDTMTSGMIQMPVEEPAPISREAGEPYCLSPEPTPLAEPILEVEVTLSKPVPVSEFSSSPIQVLTPLASHKMEIHEPNGVVPSEDLEPEVESSPELAPPPPPACLSESPVPIAPTTQPEELLNGAPSPPAVDLSPVCEPEDQAKEDTASATPPAVPSATPATAPPATSPAQEEEGEEEEEEEEGEAGAAESDKGGEDLHPTESTPVPGHLPQNVEAVAATQVAVSVPKRRRKIKELNKKEAVGDLLDAFKEVNPAVPEVENQPPAGNNPTPESEGSSGPSRPEEADETWDAKEDKIHNAENIQPGEQKYEYKSDQWRPLNLEEKKRYDREFLLGFQFIFCQYAEAGGLPHISDVVLEKANKTPLRPLDPSRLSGINCGPDFTPSFANLGRPALSSRGPPRGGPGGELPRGAAGLGPRRSLQPRPPKGARKLIASVIMTEDIKLNKAEKAWKPSSKRTAADKDRGEEDADGSKTQDLFRRVRSILNKLTPQMFQQLMKQVTQLAIDTEGASKGSLTSSLRRPFQNPTSQWPSQHVPLPHGAESATTEKPTVTVNFRKLLLNRCQKEFEKDKDDDEVFEKKQKEMDEAATAEERERLKEELEEARDIARRCSLGNIKFIGELFKLKMLTEAIMHDCVVKLLRHDEESLEFLCRLLTTIGKDLDFEKAKPRMDQYFNQMEKIIKEKKTSSRIRFMLQDVLDLRQSNWVPRRGDQGPKTIDQIHKEAEMEEHREHIKVQQLMAKGSDKRRGGPPGPPISRGLPLVDDGGWNTVPISKGSRPIDTSRLTKITKPGSIDSNNQLFAPGGRLSWGKGSSGSGAKPSDAASEVSRPATSTLNRFSALQQAVPTESTDNRRVVQRSSLSRERGGKAGEPRRRLERSERGGDRGDRLDRARTPATKRSFSKEVEERSRERPSQPEGLRKAASLTEDRDRGRDAAKREAALPPVSCAKAALSEEELEKKSKAIIEEYLHLNDMKEAVQCVQELASPSLLFIFVRHGIESTLERSAIARERMGQLLHQLLCAGHLSTAQYYQGLYEILELAEDMEIDIPHVWLYLAELVTPIMQEGGVPMGELFREITKHLRPLGKAASLLLEILRLLCKSKGPKKVAYCGVRLGSAGKNFCLEGQDVGAFITEQKVEYTLGEESEAPGQRALSSEELSRQLEKVLKEGSSNQRVFDWIEANLSEQQIASNTLVRALMTAVCYSAIIFETPLRVDVAVLKGDRICYRNTCVIAEGAARLYALQALVVTLEQPANLLRMFFDALYDEDVVKEEAFYSWESSKDPAEQQGKGVALKSVTAFFKWLREVEEEESDHN.

2 disordered regions span residues 1-123 (MSGA…SPEP) and 165-402 (HEPN…YEYK). Phosphothreonine is present on residues Thr11 and Thr27. Residues 53 to 64 (GPEHSPSESQPS) show a composition bias toward low complexity. Residues 65–76 (SPSPTPSPPPIL) show a composition bias toward pro residues. Ser120 is modified (phosphoserine). A compositionally biased stretch (low complexity) spans 238-251 (ASATPPAVPSATPA). A compositionally biased stretch (acidic residues) spans 261–275 (QEEEGEEEEEEEEGE). Composition is skewed to basic and acidic residues over residues 280-290 (ESDKGGEDLHP) and 324-340 (KELNKKEAVGDLLDAFK). The span at 359–370 (PTPESEGSSGPS) shows a compositional bias: low complexity. Residues 379–388 (WDAKEDKIHN) show a composition bias toward basic and acidic residues. At Thr452 the chain carries Phosphothreonine. Disordered stretches follow at residues 476–517 (ANLG…PPKG), 536–563 (AEKAWKPSSKRTAADKDRGEEDADGSKT), 600–636 (SKGSLTSSLRRPFQNPTSQWPSQHVPLPHGAESATTE), and 828–1028 (MAKG…KREA). The span at 479 to 488 (GRPALSSRGP) shows a compositional bias: low complexity. An omega-N-methylarginine mark is found at Arg490 and Arg499. The span at 547-563 (TAADKDRGEEDADGSKT) shows a compositional bias: basic and acidic residues. The MIF4G domain occupies 567–793 (FRRVRSILNK…QDVLDLRQSN (227 aa)). Positions 602-621 (GSLTSSLRRPFQNPTSQWPS) are enriched in polar residues. Ser832 is modified (phosphoserine). Omega-N-methylarginine occurs at positions 836 and 846. 2 positions are modified to phosphoserine: Ser881 and Ser896. Over residues 892-913 (GGRLSWGKGSSGSGAKPSDAAS) the composition is skewed to low complexity. Residue Lys899 is modified to N6-acetyllysine. Polar residues predominate over residues 918 to 937 (PATSTLNRFSALQQAVPTES). 2 positions are modified to phosphoserine: Ser948 and Ser950. A compositionally biased stretch (basic and acidic residues) spans 949-981 (LSRERGGKAGEPRRRLERSERGGDRGDRLDRAR). Ser988 is modified (phosphoserine; by PKC/PRKCA). Positions 989–1028 (FSKEVEERSRERPSQPEGLRKAASLTEDRDRGRDAAKREA) are enriched in basic and acidic residues. Phosphoserine is present on residues Ser990, Ser997, and Ser1012. Thr1014 is subject to Phosphothreonine. Residues Ser1034 and Ser1041 each carry the phosphoserine modification. One can recognise an MI domain in the interval 1044-1166 (ELEKKSKAII…PMGELFREIT (123 aa)). In terms of domain architecture, W2 spans 1231–1401 (EESEAPGQRA…REVEEEESDH (171 aa)). Position 1399 is a phosphoserine (Ser1399).

It belongs to the eukaryotic initiation factor 4G family. In terms of assembly, eIF4F is a multi-subunit complex, the composition of which varies with external and internal environmental conditions. It is composed of at least EIF4A, EIF4E (cap-binding) and EIF4G1/EIF4G3. Interacts with eIF3 complex, mutually exclusive with EIF4A1 or EIF4A2, EIF4E and through its N-terminus with PABPC1. Interacts with EIF4E or with EIF1 (mutually exclusive) through a common binding site. Interacts through its C-terminus with the serine/threonine kinases MKNK1, and with MKNK2. Appears to act as a scaffold protein, holding these enzymes in place to phosphorylate EIF4E. Non-phosphorylated EIF4EBP1 competes with EIF4G1/EIF4G3 to interact with EIF4E; insulin stimulated MAP-kinase (MAPK1 and MAPK3) phosphorylation of EIF4EBP1 causes dissociation of the complex allowing EIF4G1/EIF4G3 to bind and consequent initiation of translation. EIF4G1/EIF4G3 interacts with PABPC1 to bring about circularization of the mRNA. Interacts with EIF4E3. Interacts with CIRBP and MIF4GD. Interacts with RBM4. Interacts with HNRNPD/AUF1; the interaction requires RNA. Interacts with DDX3X; the interaction requires RNA. Interacts with DAZAP2. In terms of processing, phosphorylated at multiple sites in vivo. Phosphorylation at Ser-988 by PRKCA induces binding to MKNK1.

The protein resides in the cytoplasm. It localises to the nucleus. The protein localises to the stress granule. In terms of biological role, component of the protein complex eIF4F, which is involved in the recognition of the mRNA cap, ATP-dependent unwinding of 5'-terminal secondary structure and recruitment of mRNA to the ribosome. Exists in two complexes, either with EIF1 or with EIF4E (mutually exclusive). Together with EIF1, is required for leaky scanning, in particular for avoiding cap-proximal start codon. Together with EIF4E, antagonizes the scanning promoted by EIF1-EIF4G1 and locates the start codon (through a TISU element) without scanning. As a member of the eIF4F complex, required for endoplasmic reticulum stress-induced ATF4 mRNA translation. The chain is Eukaryotic translation initiation factor 4 gamma 1 (EIF4G1) from Oryctolagus cuniculus (Rabbit).